Reading from the N-terminus, the 199-residue chain is uncharacterized protein (199 aa).

The signal sequence occupies residues 1–23 (MKPGCTLFFLLCSALTVTTEAHA).

This is an uncharacterized protein from Escherichia coli (strain K12).